Reading from the N-terminus, the 569-residue chain is CTP synthase (569 aa).

Residues 313-569 (RIAMVGKYTG…NASLERLKKM (257 aa)) enclose the Glutamine amidotransferase type-1 domain. The active-site Nucleophile is the Cys410. Active-site residues include His541 and Glu543.

This sequence belongs to the CTP synthase family.

It carries out the reaction UTP + L-glutamine + ATP + H2O = CTP + L-glutamate + ADP + phosphate + 2 H(+). Its pathway is pyrimidine metabolism; CTP biosynthesis via de novo pathway; CTP from UDP: step 2/2. Its function is as follows. Catalyzes the ATP-dependent amination of UTP to CTP with either L-glutamine or ammonia as the source of nitrogen. In Dictyostelium discoideum (Social amoeba), this protein is CTP synthase (ctps).